The sequence spans 287 residues: MSWLEKILPKSKITTPRRHNIPEGVWTKCSACEQVLYRAELERNLEVCPKCDHHMRISARARLESFLDEQGRTEIGAELEPQDVLKFKDSKRYKDRLSAAQKETGEKDALVVMKGTLKGVPVVACSFEFSFIGGSMSSVVGARFVRAVEESIKEGRGLVCFSTSGGARMQEALFSLMQMAKTSAALDRLSKAGLPYISVLTDPTMGGVSASLAMLGDINVGEPKALIGFAGPRVIEQTVREKLPEGFQRSEFLLEKGAIDLIIDRREMRNRLASLLAKMLNTHVIEE.

Residues 25–287 (VWTKCSACEQ…KMLNTHVIEE (263 aa)) enclose the CoA carboxyltransferase N-terminal domain. Zn(2+) contacts are provided by cysteine 29, cysteine 32, cysteine 48, and cysteine 51. The segment at 29-51 (CSACEQVLYRAELERNLEVCPKC) adopts a C4-type zinc-finger fold.

The protein belongs to the AccD/PCCB family. As to quaternary structure, acetyl-CoA carboxylase is a heterohexamer composed of biotin carboxyl carrier protein (AccB), biotin carboxylase (AccC) and two subunits each of ACCase subunit alpha (AccA) and ACCase subunit beta (AccD). The cofactor is Zn(2+).

It localises to the cytoplasm. It carries out the reaction N(6)-carboxybiotinyl-L-lysyl-[protein] + acetyl-CoA = N(6)-biotinyl-L-lysyl-[protein] + malonyl-CoA. It functions in the pathway lipid metabolism; malonyl-CoA biosynthesis; malonyl-CoA from acetyl-CoA: step 1/1. In terms of biological role, component of the acetyl coenzyme A carboxylase (ACC) complex. Biotin carboxylase (BC) catalyzes the carboxylation of biotin on its carrier protein (BCCP) and then the CO(2) group is transferred by the transcarboxylase to acetyl-CoA to form malonyl-CoA. The sequence is that of Acetyl-coenzyme A carboxylase carboxyl transferase subunit beta from Aeromonas hydrophila subsp. hydrophila (strain ATCC 7966 / DSM 30187 / BCRC 13018 / CCUG 14551 / JCM 1027 / KCTC 2358 / NCIMB 9240 / NCTC 8049).